The sequence spans 390 residues: Type II methyltransferase M.SacI (390 aa).

One can recognise an SAM-dependent MTase C5-type domain in the interval 5–371 (LPVISLFSGA…RALMEQLGYL (367 aa)). Cys-96 is a catalytic residue.

The protein belongs to the class I-like SAM-binding methyltransferase superfamily. C5-methyltransferase family.

It carries out the reaction a 2'-deoxycytidine in DNA + S-adenosyl-L-methionine = a 5-methyl-2'-deoxycytidine in DNA + S-adenosyl-L-homocysteine + H(+). Its function is as follows. A beta methylase recognizes the double-stranded sequence 5'-GAGCTC-3', methylates C-4 on both strands, and protects the DNA from cleavage by the SacI endonuclease. The chain is Type II methyltransferase M.SacI from Streptomyces achromogenes.